Here is a 528-residue protein sequence, read N- to C-terminus: MSKNHRKEVDRRRTFGIISHPDAGKTTLTEKLLLFGGAIQMAGAVKARKAARHATSDWMAMEQERGISVTSSVMKFNYRDYEINLLDTPGHQDFSEDTYRVLTAVDSALMVIDSAKGVETQTRKLMEVCRMRNTPIMTFINKLDREGLEPLDLLADIEETLQIECAPLSWPIGMGKRFKGTYNLYRKQLCLFMAGQETRPQDMLVIEDLDDPRLDELLGSQADQLREDIELLEGAANPFEPEEYLKGNQTPVFFGSAINNFGVQEMLDAFVEQAPVPRPAPTTTREISPYEEDFSGFVFKIQANMDPAHRDRIAFFRICSGTFHRGMKVRHHRIGKDVNIANATIFMAQDRANVEEAFPGDIIGIHNHGTIKIGDTFTDKEPLKFTGIPSFAPEHFRRVRLKNPLKSKQLEKGLIQLAEEGAVQLFRPLFNTDYILGAVGVLQFDVIMSRLKNEYSVDAIYEGVEYATARWVECDDRKVLEEFEKKCQVNLAYDAEGNLTYLASSEWRLGHTMEQWPQVVFHKTREHN.

Positions 10–278 (DRRRTFGIIS…AFVEQAPVPR (269 aa)) constitute a tr-type G domain. Residues 19 to 26 (SHPDAGKT), 87 to 91 (DTPGH), and 141 to 144 (NKLD) contribute to the GTP site.

It belongs to the TRAFAC class translation factor GTPase superfamily. Classic translation factor GTPase family. PrfC subfamily.

The protein resides in the cytoplasm. In terms of biological role, increases the formation of ribosomal termination complexes and stimulates activities of RF-1 and RF-2. It binds guanine nucleotides and has strong preference for UGA stop codons. It may interact directly with the ribosome. The stimulation of RF-1 and RF-2 is significantly reduced by GTP and GDP, but not by GMP. This Syntrophotalea carbinolica (strain DSM 2380 / NBRC 103641 / GraBd1) (Pelobacter carbinolicus) protein is Peptide chain release factor 3.